A 458-amino-acid chain; its full sequence is Bifunctional protein GlmU (458 aa).

The interval 1–229 (MKEKALSIVI…FMEVEGVNNR (229 aa)) is pyrophosphorylase. Residues 11 to 14 (LAAG), lysine 25, glutamine 76, 81 to 82 (GT), 103 to 105 (YGD), glycine 140, glutamate 154, asparagine 169, and asparagine 227 each bind UDP-N-acetyl-alpha-D-glucosamine. Mg(2+) is bound at residue aspartate 105. Asparagine 227 provides a ligand contact to Mg(2+). Positions 230–250 (QQLARLERYYQRKQADNLLLA) are linker. The tract at residues 251–458 (GVALADPERF…WQRPTKQTKK (208 aa)) is N-acetyltransferase. UDP-N-acetyl-alpha-D-glucosamine contacts are provided by arginine 333 and lysine 351. Histidine 363 acts as the Proton acceptor in catalysis. Residues tyrosine 366 and asparagine 377 each coordinate UDP-N-acetyl-alpha-D-glucosamine. Acetyl-CoA-binding positions include alanine 380, 386–387 (NY), serine 405, alanine 423, and arginine 440.

It in the N-terminal section; belongs to the N-acetylglucosamine-1-phosphate uridyltransferase family. This sequence in the C-terminal section; belongs to the transferase hexapeptide repeat family. In terms of assembly, homotrimer. The cofactor is Mg(2+).

The protein localises to the cytoplasm. It carries out the reaction alpha-D-glucosamine 1-phosphate + acetyl-CoA = N-acetyl-alpha-D-glucosamine 1-phosphate + CoA + H(+). The enzyme catalyses N-acetyl-alpha-D-glucosamine 1-phosphate + UTP + H(+) = UDP-N-acetyl-alpha-D-glucosamine + diphosphate. It participates in nucleotide-sugar biosynthesis; UDP-N-acetyl-alpha-D-glucosamine biosynthesis; N-acetyl-alpha-D-glucosamine 1-phosphate from alpha-D-glucosamine 6-phosphate (route II): step 2/2. It functions in the pathway nucleotide-sugar biosynthesis; UDP-N-acetyl-alpha-D-glucosamine biosynthesis; UDP-N-acetyl-alpha-D-glucosamine from N-acetyl-alpha-D-glucosamine 1-phosphate: step 1/1. Its pathway is bacterial outer membrane biogenesis; LPS lipid A biosynthesis. Catalyzes the last two sequential reactions in the de novo biosynthetic pathway for UDP-N-acetylglucosamine (UDP-GlcNAc). The C-terminal domain catalyzes the transfer of acetyl group from acetyl coenzyme A to glucosamine-1-phosphate (GlcN-1-P) to produce N-acetylglucosamine-1-phosphate (GlcNAc-1-P), which is converted into UDP-GlcNAc by the transfer of uridine 5-monophosphate (from uridine 5-triphosphate), a reaction catalyzed by the N-terminal domain. The polypeptide is Bifunctional protein GlmU (Pasteurella multocida (strain Pm70)).